A 325-amino-acid polypeptide reads, in one-letter code: Phospho-N-acetylmuramoyl-pentapeptide-transferase (325 aa).

A run of 10 helical transmembrane segments spans residues 9–29 (ALLV…PWLL), 53–73 (TMGG…FQAF), 77–97 (TLLL…DDYL), 112–132 (KLLG…AFLG), 154–174 (LGNV…ANAV), 182–202 (GLCS…SLAL), 204–224 (EKGL…FLVY), 231–251 (VFMG…FAVL), 257–277 (FLLL…IQVI), and 305–325 (KIVL…GYGL).

Belongs to the glycosyltransferase 4 family. MraY subfamily. It depends on Mg(2+) as a cofactor.

The protein resides in the cell membrane. The enzyme catalyses UDP-N-acetyl-alpha-D-muramoyl-L-alanyl-gamma-D-glutamyl-meso-2,6-diaminopimeloyl-D-alanyl-D-alanine + di-trans,octa-cis-undecaprenyl phosphate = di-trans,octa-cis-undecaprenyl diphospho-N-acetyl-alpha-D-muramoyl-L-alanyl-D-glutamyl-meso-2,6-diaminopimeloyl-D-alanyl-D-alanine + UMP. It participates in cell wall biogenesis; peptidoglycan biosynthesis. Its function is as follows. Catalyzes the initial step of the lipid cycle reactions in the biosynthesis of the cell wall peptidoglycan: transfers peptidoglycan precursor phospho-MurNAc-pentapeptide from UDP-MurNAc-pentapeptide onto the lipid carrier undecaprenyl phosphate, yielding undecaprenyl-pyrophosphoryl-MurNAc-pentapeptide, known as lipid I. This Carboxydothermus hydrogenoformans (strain ATCC BAA-161 / DSM 6008 / Z-2901) protein is Phospho-N-acetylmuramoyl-pentapeptide-transferase.